The following is a 379-amino-acid chain: Alanine racemase (379 aa).

K37 (proton acceptor; specific for D-alanine) is an active-site residue. K37 carries the post-translational modification N6-(pyridoxal phosphate)lysine. R139 is a substrate binding site. The active-site Proton acceptor; specific for L-alanine is Y266. M314 contacts substrate.

It belongs to the alanine racemase family. Pyridoxal 5'-phosphate serves as cofactor.

The enzyme catalyses L-alanine = D-alanine. It functions in the pathway amino-acid biosynthesis; D-alanine biosynthesis; D-alanine from L-alanine: step 1/1. Functionally, catalyzes the interconversion of L-alanine and D-alanine. May also act on other amino acids. This chain is Alanine racemase (alr), found in Sorangium cellulosum (strain So ce56) (Polyangium cellulosum (strain So ce56)).